The primary structure comprises 442 residues: Mannosylglycerate hydrolase (442 aa).

Substrate-binding positions include Tyr-38, 42-45 (WSWD), Tyr-90, Gln-116, and Gly-176. The active-site Proton donor is the Asp-178. Substrate is bound by residues Arg-213 and 369–370 (YW). Glu-413 (proton acceptor) is an active-site residue.

The protein belongs to the glycosyl hydrolase 63 family. In terms of assembly, homodimer in solution.

It catalyses the reaction (2R)-2-O-(alpha-D-mannosyl)-glycerate + H2O = D-mannose + (R)-glycerate. The catalysed reaction is (2R)-2-O-(alpha-D-glucopyranosyl)-glycerate + H2O = (R)-glycerate + D-glucose. Activity is not stimulated by divalent cations and not affected in the presence of EDTA. In terms of biological role, hydrolase that catalyzes the hydrolysis of mannosylglycerate (MG), a solute produced in response to osmotic stress in thermophiles, into mannose and glycerate. Can also hydrolyze glucosylglycerate (GG) to glucose and glycerate, with similar catalytic efficiency. Is highly specific for MG and GG, and cannot use mannosylglyceramide (MGA), glucosylglycerol, mannosylglucosylglycerate (MGG), glucosylglucosylglycerate (GGG) or trehalose as substrates. This is Mannosylglycerate hydrolase from Rubrobacter radiotolerans (Arthrobacter radiotolerans).